A 153-amino-acid polypeptide reads, in one-letter code: Small ribosomal subunit protein uS5 (153 aa).

The S5 DRBM domain occupies 15–78 (FQEVVVNIGR…DDAFKNLIHV (64 aa)).

Belongs to the universal ribosomal protein uS5 family. In terms of assembly, part of the 30S ribosomal subunit. Contacts proteins S4 and S8.

With S4 and S12 plays an important role in translational accuracy. Its function is as follows. Located at the back of the 30S subunit body where it stabilizes the conformation of the head with respect to the body. In Helicobacter pylori (strain P12), this protein is Small ribosomal subunit protein uS5.